A 337-amino-acid polypeptide reads, in one-letter code: Heat-inducible transcription repressor HrcA (337 aa).

This sequence belongs to the HrcA family.

In terms of biological role, negative regulator of class I heat shock genes (grpE-dnaK-dnaJ and groELS operons). Prevents heat-shock induction of these operons. The polypeptide is Heat-inducible transcription repressor HrcA (Pseudarthrobacter chlorophenolicus (strain ATCC 700700 / DSM 12829 / CIP 107037 / JCM 12360 / KCTC 9906 / NCIMB 13794 / A6) (Arthrobacter chlorophenolicus)).